The sequence spans 565 residues: Zinc finger protein 512 (565 aa).

Positions 1-30 (MSSRLGAVPATSGPTTFKQQRSTRIVGAKN) are disordered. A compositionally biased stretch (polar residues) spans 12–23 (SGPTTFKQQRST). Glycyl lysine isopeptide (Lys-Gly) (interchain with G-Cter in SUMO2) cross-links involve residues lysine 18 and lysine 83. A disordered region spans residues 85–147 (AATSHVEGSG…QARRIRKEPP (63 aa)). Residues 118 to 129 (KKHKLYGRKQRP) are compositionally biased toward basic residues. The C2H2-type 1 zinc finger occupies 196–219 (FTCHHCGKQLRSLAGMKYHVMANH). Lysine 226 participates in a covalent cross-link: Glycyl lysine isopeptide (Lys-Gly) (interchain with G-Cter in SUMO2). Residues 286–309 (LKCHHCGKPYRSKAGLAYHLRSEH) form a C2H2-type 2 zinc finger. Lysine 332 participates in a covalent cross-link: Glycyl lysine isopeptide (Lys-Gly) (interchain with G-Cter in SUMO2). The C2H2-type 3; atypical zinc finger occupies 405–429 (IQCPNQGCEAVYSSVSGLKAHLGSC). The C2H2-type 4 zinc finger occupies 439-462 (YKCLLCQKEFVSESGVKYHINSVH). Residues 484–493 (KQRQQEEEKR) are compositionally biased toward basic and acidic residues. Positions 484 to 565 (KQRQQEEEKR…PKTNHKRGRK (82 aa)) are disordered. Basic residues predominate over residues 494 to 507 (RQQHRSRRSLRRRQ). The segment covering 522–531 (VGKDQRRNEE) has biased composition (basic and acidic residues). The span at 554 to 565 (KPPKTNHKRGRK) shows a compositional bias: basic residues.

It belongs to the krueppel C2H2-type zinc-finger protein family.

The protein localises to the nucleus. In terms of biological role, may be involved in transcriptional regulation. This chain is Zinc finger protein 512 (ZNF512), found in Macaca fascicularis (Crab-eating macaque).